A 486-amino-acid chain; its full sequence is MKLTSLRVSLLALGLVTSGFAAAETYTVDRYQDDSEKGSLRWAIEQSNANSAQENQILIQAVGKAPYVIKVDKPLPPIKSSVKIIGTEWDKTGEFIAIDGSNYIKGEGEKACPGANPGQYGTNVRTMTLPGLVLQDVNGVTLKGLDVHRFCIGVLVNRSSNNLIQHNRISNNYGGAGVMITGDDGKGNPTSTTTNNNKVLDNVFIDNGDGLELTRGAAFNLIANNLFTSTKANPEPSQGIEILWGNDNAVVGNKFENYSDGLQINWGKRNYIAYNELTNNSLGFNLTGDGNIFDSNKVHGNRIGIAIRSEKDANARITLTKNQIWDNGKDIKRCEAGGSCVPNQRLGAIVFGVPALEHEGFVGSRGGGVVIEPAKLQKTCTQPNQQNCNAIPNQGIQAPKLTVSKKQLTVEVKGTPNQRYNVEFFGNRNASSSEAEQYLGSIVVVTDHQGLAKANWAPKVSMPSVTANVTDHLGATSELSSAVKMR.

The catalysed reaction is 3-dehydroshikimate = 3,4-dihydroxybenzoate + H2O. It participates in aromatic compound metabolism; 3,4-dihydroxybenzoate biosynthesis; 3,4-dihydroxybenzoate from 3-dehydroquinate: step 2/2. Its function is as follows. Converts dehydroshikimate to protocatechuate. The polypeptide is 3-dehydroshikimate dehydratase (quiC) (Acinetobacter baylyi (strain ATCC 33305 / BD413 / ADP1)).